A 1307-amino-acid polypeptide reads, in one-letter code: Contactin-associated protein like 5-3 (1307 aa).

An N-terminal signal peptide occupies residues 1 to 24; that stretch reads MDFVPRLNSVLTLVLSGLWHFGLT. Over 25 to 1238 the chain is Extracellular; sequence ATNCDNCDDP…PLTNAVLSDS (1214 aa). Residues 31-175 enclose the F5/8 type C domain; the sequence is CDDPLASFLS…IGMRMEVYGC (145 aa). Cys-31 and Cys-175 are disulfide-bonded. 2 consecutive Laminin G-like domains span residues 181–361 and 368–545; these read VADF…TFSC and PITF…IDLC. Residue Asn-283 is glycosylated (N-linked (GlcNAc...) asparagine). A disulfide bridge links Cys-330 with Cys-361. N-linked (GlcNAc...) asparagine glycosylation occurs at Asn-497. 4 disulfides stabilise this stretch: Cys-513–Cys-545, Cys-551–Cys-562, Cys-556–Cys-571, and Cys-573–Cys-583. Positions 547–584 constitute an EGF-like 1 domain; it reads IKDRCLPNYCEHGGHCVQTWTTFYCNCSNTGYTGATCH. Positions 585–792 constitute a Fibrinogen C-terminal domain; that stretch reads DSIYEQSCEV…LRCYGDRHFW (208 aa). N-linked (GlcNAc...) asparagine glycosylation is found at Asn-600, Asn-624, and Asn-637. In terms of domain architecture, Laminin G-like 3 spans 793 to 958; sequence NAVSFSTEAS…MVTSGVRPGC (166 aa). 5 disulfides stabilise this stretch: Cys-931–Cys-958, Cys-962–Cys-975, Cys-969–Cys-984, Cys-986–Cys-996, and Cys-1165–Cys-1200. Positions 959 to 997 constitute an EGF-like 2 domain; the sequence is PGHCSSYGNNCHNGGKCVEKHNSYSCDCTKSPYEGPFCQ. The Laminin G-like 4 domain maps to 1019-1200; it reads PVSKNTSTSS…VQGSLREFSC (182 aa). A helical membrane pass occupies residues 1239–1259; it reads AVIGGVIAVVTFITFCVIGIM. At 1260–1307 the chain is on the cytoplasmic side; the sequence is TRFLYQHKQSHCTSQKKEKEYSENLDSSFRHDIDLQSTTSKCKREYFI.

It belongs to the neurexin family.

Its subcellular location is the membrane. May play a role in the correct development and proper functioning of the peripheral and central nervous system and be involved in cell adhesion and intercellular communication. The sequence is that of Contactin-associated protein like 5-3 (Cntnap5c) from Rattus norvegicus (Rat).